The chain runs to 514 residues: MNTRNTRSKQRAPFGVSSSVKPRLDLIEQAPNPAYDRHPACITLPERTCRHPLTDLEANEQLGRCEDSVKNRFDRVIPFLQVVAGIPLGLDYVTRVQELAQSSLGHTLPEELLKDNWISGHNLKGIFGYATAKALTAATEQFSRKIMSEKDDSASAIGFFLDCGFHAVDISPCADGRLKGLLPYILRLPLTAFTYRKAYAGSMFDIEDDLAQWEKNELRRYREGVPNTADQPTRYLKIAVYHFSTSDPTHSGCAAHGSNDRAALEAALTQLMKFREAVENAHCCGASIDILLIGVDTDTDAIRVHIPDSKGFLNPYRYVDNTVTYAQTLHLAPDEARVIIHEAILNANRSDGWAKGNGVASEGMRRFIGQLLINNLSQIDYVVNRHGGRYPPNDIGHAERYISVGDGFDEVQIRNLAYYAHLDTVEENAIDVDVGIKIFTKLNLSRGLPIPIAIHYRYDPNVPGSRERTVVKARRIYNAIKERFSSLDEQNLLQFRLSVQAQDIGSPIEEVASA.

Residues 1–144 are N-terminal domain; the sequence is MNTRNTRSKQ…LTAATEQFSR (144 aa). A catalytic domain region spans residues 151 to 397; sequence DDSASAIGFF…GRYPPNDIGH (247 aa). Cys-173 contacts Zn(2+). Asp-175 functions as the Proton acceptor in the catalytic mechanism. Zn(2+) contacts are provided by His-242 and Cys-253. Positions 398–514 are C-terminal domain; the sequence is AERYISVGDG…GSPIEEVASA (117 aa).

Belongs to the beta-class carbonic anhydrase family. CsoSCA subfamily. In terms of assembly, homodimer, may form filaments. It depends on Zn(2+) as a cofactor.

The protein localises to the carboxysome. The catalysed reaction is hydrogencarbonate + H(+) = CO2 + H2O. Carbonic anhydrase activity is inhibited by ethoxyzolamide, dithiothreitol, cyanide, and divalent metal chelators dipicolinic acid and nitrilotriacetic acid. Reversible hydration of carbon dioxide. Essential for chemolithotrophic carbon dioxide fixation, supplies CO(2) to RuBisCO (ribulose bisphosphate carboxylase, cbbL-cbbS) in the carboxysome. There are estimated to be 40 CsoSCA dimers per carboxysome. In terms of biological role, unlike beta-carboxysomes, alpha-carboxysomes (Cb) can form without cargo protein. CsoS2 is essential for Cb formation and is also capable of targeting foreign proteins to the Cb. The Cb shell assembles with the aid of CsoS2; CsoS1A, CsoS1B and CsoS1C form the majority of the shell while CsoS4A and CsoS4B form vertices. CsoS1D forms pseudohexamers that probably control metabolite flux into and out of the shell. The protein is Carboxysome shell carbonic anhydrase of Halothiobacillus neapolitanus (strain ATCC 23641 / c2) (Thiobacillus neapolitanus).